Reading from the N-terminus, the 420-residue chain is Calsequestrin-1 (420 aa).

The signal sequence occupies residues 1–22 (MKGPWLVLAALCLSLANLGPRG). The N-linked (GlcNAc...) asparagine glycan is linked to asparagine 338. The interval 369–420 (LEGEVNTEDDDDDDDDDDDDDDDDDDDDDDDDDDDDDDDDDDDDDDDDDDDD) is disordered.

The protein belongs to the calsequestrin family. In terms of assembly, monomer; increases in response to a depletion of intracellular calcium. Homodimer. Homotetramer and homopolymer. Can form linear homooligomers. Ca(2+) ions promote oligomerization. Detected in skeletal muscle (at protein level). Detected in skeletal muscle.

It localises to the endoplasmic reticulum. Its subcellular location is the sarcoplasmic reticulum. The protein localises to the sarcoplasmic reticulum lumen. The protein resides in the sarcoplasmic reticulum membrane. It is found in the mitochondrion matrix. Functionally, calsequestrin is a high-capacity, moderate affinity, calcium-binding protein and thus acts as an internal calcium store in muscle. Calcium ions are bound by clusters of acidic residues at the protein surface, often at the interface between subunits. Can bind around 80 Ca(2+) ions. Regulates the release of lumenal Ca(2+) via the calcium release channel RYR1; this plays an important role in triggering muscle contraction. Negatively regulates store-operated Ca(2+) entry (SOCE) activity. The sequence is that of Calsequestrin-1 from Pelophylax lessonae (Pool frog).